The following is a 369-amino-acid chain: Phospho-N-acetylmuramoyl-pentapeptide-transferase (369 aa).

10 helical membrane passes run 30–50 (LAIF…IRWM), 74–94 (GTPT…TLLW), 97–117 (LSNP…LLGF), 136–156 (IRLA…IVFA), 177–197 (YFVD…VGAA), 208–228 (GLAT…AYLV), 244–264 (GVGE…GFLW), 272–292 (IFMG…VAVA), 297–317 (IVLA…IIQV), and 346–366 (TVVI…LATL).

This sequence belongs to the glycosyltransferase 4 family. MraY subfamily. The cofactor is Mg(2+).

It is found in the cell inner membrane. The catalysed reaction is UDP-N-acetyl-alpha-D-muramoyl-L-alanyl-gamma-D-glutamyl-meso-2,6-diaminopimeloyl-D-alanyl-D-alanine + di-trans,octa-cis-undecaprenyl phosphate = di-trans,octa-cis-undecaprenyl diphospho-N-acetyl-alpha-D-muramoyl-L-alanyl-D-glutamyl-meso-2,6-diaminopimeloyl-D-alanyl-D-alanine + UMP. It participates in cell wall biogenesis; peptidoglycan biosynthesis. Functionally, catalyzes the initial step of the lipid cycle reactions in the biosynthesis of the cell wall peptidoglycan: transfers peptidoglycan precursor phospho-MurNAc-pentapeptide from UDP-MurNAc-pentapeptide onto the lipid carrier undecaprenyl phosphate, yielding undecaprenyl-pyrophosphoryl-MurNAc-pentapeptide, known as lipid I. This Phenylobacterium zucineum (strain HLK1) protein is Phospho-N-acetylmuramoyl-pentapeptide-transferase.